Consider the following 544-residue polypeptide: Glucans biosynthesis protein G 1 (544 aa).

Residues 1–33 form the signal peptide; it reads MVSLLRCQSFKPSSIICSLALSAAFALSGTAFA. Residues 36–58 form a disordered region; the sequence is SKPAENKPATPVVSPPKATAPSA.

Belongs to the OpgD/OpgG family.

It is found in the periplasm. Its pathway is glycan metabolism; osmoregulated periplasmic glucan (OPG) biosynthesis. In terms of biological role, involved in the biosynthesis of osmoregulated periplasmic glucans (OPGs). The polypeptide is Glucans biosynthesis protein G 1 (opgG1) (Shewanella oneidensis (strain ATCC 700550 / JCM 31522 / CIP 106686 / LMG 19005 / NCIMB 14063 / MR-1)).